The sequence spans 550 residues: 4-coumarate--CoA ligase-like 8 (550 aa).

S207, S208, G209, T210, T211, and K215 together coordinate ATP. F253 serves as a coordination point for (E)-4-coumaroyl-AMP. R274 contacts CoA. The SBD1 stretch occupies residues D276–Q347. Residues G325, Q347, G348, and T352 each contribute to the (E)-4-coumaroyl-AMP site. Q347, G348, T352, D430, and R445 together coordinate ATP. The SBD2 stretch occupies residues G348–Y412. K447 and K451 together coordinate (E)-4-coumaroyl-AMP. The CoA site is built by K453 and G454. Residue K536 participates in ATP binding. Positions S548 to I550 match the Microbody targeting signal motif.

Belongs to the ATP-dependent AMP-binding enzyme family. Mg(2+) serves as cofactor.

The protein localises to the peroxisome. It carries out the reaction (E)-4-coumarate + ATP + CoA = (E)-4-coumaroyl-CoA + AMP + diphosphate. The catalysed reaction is (E)-4-coumarate + ATP + H(+) = (E)-4-coumaroyl-AMP + diphosphate. It catalyses the reaction (E)-4-coumaroyl-AMP + CoA = (E)-4-coumaroyl-CoA + AMP + H(+). Its function is as follows. Carboxylate--CoA ligase that may use 4-coumarate as substrate. Follows a two-step reaction mechanism, wherein the carboxylate substrate first undergoes adenylation by ATP, followed by a thioesterification in the presence of CoA to yield the final CoA thioester. The sequence is that of 4-coumarate--CoA ligase-like 8 from Arabidopsis thaliana (Mouse-ear cress).